The primary structure comprises 197 residues: Probable NADPH:quinone oxidoreductase 1 (197 aa).

The protein belongs to the SsuE family. In terms of assembly, homotetramer. FMN serves as cofactor.

It carries out the reaction a quinone + NADH + H(+) = a quinol + NAD(+). The enzyme catalyses a quinone + NADPH + H(+) = a quinol + NADP(+). Its function is as follows. The enzyme apparently serves as a quinone reductase in connection with conjugation reactions of hydroquinones involved in detoxification pathways. The chain is Probable NADPH:quinone oxidoreductase 1 from Oryza sativa subsp. japonica (Rice).